Here is a 164-residue protein sequence, read N- to C-terminus: Disulfide bond formation protein B (164 aa).

Residues 1-4 (MRII) lie on the Cytoplasmic side of the membrane. A helical transmembrane segment spans residues 5–21 (FLLIALICAGLVSYALY). The Periplasmic segment spans residues 22-39 (LQLADGLLPCPLCIFQRM). An intrachain disulfide couples C31 to C34. The chain crosses the membrane as a helical span at residues 40–56 (AYWLVGITALFAFIHHP). At 57-62 (QRLGRR) the chain is on the cytoplasmic side. Residues 63–80 (IYCGLIILFSLAGAIVAG) form a helical membrane-spanning segment. Residues 81 to 136 (RQAWLVRFPEAFECGISPEEAFLNELPLARWWPDMFEANGDCTDGTWQFLSLTIPD) lie on the Periplasmic side of the membrane. A disulfide bridge connects residues C94 and C122. Residues 137–155 (WSLLIFLAFSLIAGLLWRS) form a helical membrane-spanning segment. The Cytoplasmic segment spans residues 156 to 164 (RSISSSNLK).

It belongs to the DsbB family.

Its subcellular location is the cell inner membrane. In terms of biological role, required for disulfide bond formation in some periplasmic proteins. Acts by oxidizing the DsbA protein. This Nitrosomonas europaea (strain ATCC 19718 / CIP 103999 / KCTC 2705 / NBRC 14298) protein is Disulfide bond formation protein B.